We begin with the raw amino-acid sequence, 301 residues long: MKIAILSRNRRLYSTRRLVEACTQRGHEVRVIDILKCYIDIASASPAIWYMGEKLEGFDAVIPRIGASVTHYGLAVIRQFEMMGVYCLTESIALGRSRDKLRALQLLSRKGIGLPKTSFAYNVYDARELIKLVGGTPLVLKLCEGTQGKGIVLAETQKAAESVIEAFRELRAEFLVQEFIKEANGSDVRCFVVGDKVVASMERTAQDGEFRSNLHRGGTAKVTKLSPTERRTAIKAAQTMGLKVAGVDLLRSSRGPLVMEVNSSPGLEGIESATGKDIAGLIVAYMEENAKPVTTTRAGKG.

The ATP-grasp domain occupies 104-287; it reads LQLLSRKGIG…IAGLIVAYME (184 aa). Residues Lys-141, 178–179, Asp-187, and 211–213 contribute to the ATP site; these read EF and RSN. 3 residues coordinate Mg(2+): Asp-248, Glu-260, and Asn-262. Mn(2+)-binding residues include Asp-248, Glu-260, and Asn-262.

The protein belongs to the RimK family. Requires Mg(2+) as cofactor. The cofactor is Mn(2+).

The chain is Probable alpha-L-glutamate ligase from Cellvibrio japonicus (strain Ueda107) (Pseudomonas fluorescens subsp. cellulosa).